The following is a 391-amino-acid chain: Multidrug resistance protein MdtL (391 aa).

Over 1-3 the chain is Cytoplasmic; sequence MSR. Residues 4 to 24 traverse the membrane as a helical segment; the sequence is FLICSFALVLLYPAGIDMYLV. At 25 to 41 the chain is on the periplasmic side; it reads GLPRIAADLNASEAQLH. The helical transmembrane segment at 42 to 62 threads the bilayer; that stretch reads IAFSVYLAGMAAAMLFAGKVA. The Cytoplasmic segment spans residues 63–68; the sequence is DRSGRK. A helical transmembrane segment spans residues 69–89; it reads PVAIPGAALFIIASVFCSLAE. Over 90–92 the chain is Periplasmic; sequence TSA. The chain crosses the membrane as a helical span at residues 93-113; that stretch reads LFLAGRFLQGLGAGCCYVVAF. At 114-130 the chain is on the cytoplasmic side; it reads AILRDTLDDRRRAKVLS. A helical membrane pass occupies residues 131–151; that stretch reads LLNGITCIIPVLAPVLGHLIM. Topologically, residues 152–157 are periplasmic; sequence LKFPWQ. The chain crosses the membrane as a helical span at residues 158–178; that stretch reads SLFWTMATMGIAVLMLSLFIL. At 179-202 the chain is on the cytoplasmic side; the sequence is KETRPAAPAASDKPRENSESLLNR. Residues 203 to 222 form a helical membrane-spanning segment; the sequence is FFLSRVVITTLSVSVILTFV. Residues 223-244 lie on the Periplasmic side of the membrane; it reads NTSPVLLMEIMGFERGEYATIM. The chain crosses the membrane as a helical span at residues 245–265; that stretch reads ALTAGVSMTVSFSTPFALGIF. Topologically, residues 266 to 268 are cytoplasmic; that stretch reads KPR. A helical transmembrane segment spans residues 269–289; sequence TLMITSQVLFLAAGITLAVSP. Residues 290–292 are Periplasmic-facing; that stretch reads SHA. A helical transmembrane segment spans residues 293-313; sequence VSLFGITLICAGFSVGFGVAM. Residues 314–330 lie on the Cytoplasmic side of the membrane; it reads SQALGPFSLRAGVASST. A helical transmembrane segment spans residues 331 to 351; sequence LGIAQVCGSSLWIWLAAVVGI. At 352–355 the chain is on the periplasmic side; it reads GAWN. Residues 356-376 traverse the membrane as a helical segment; the sequence is MLIGILIACSIVSLLLIMFVA. Topologically, residues 377-391 are cytoplasmic; it reads PGRPVAAHEEIHHHA.

Belongs to the major facilitator superfamily. DHA1 family. MdtL (TC 2.A.1.2.22) subfamily.

The protein resides in the cell inner membrane. In terms of biological role, confers resistance to chloramphenicol. This Escherichia coli O6:K15:H31 (strain 536 / UPEC) protein is Multidrug resistance protein MdtL.